The following is a 660-amino-acid chain: DNA mismatch repair protein MutL (660 aa).

The protein belongs to the DNA mismatch repair MutL/HexB family.

Its function is as follows. This protein is involved in the repair of mismatches in DNA. It is required for dam-dependent methyl-directed DNA mismatch repair. May act as a 'molecular matchmaker', a protein that promotes the formation of a stable complex between two or more DNA-binding proteins in an ATP-dependent manner without itself being part of a final effector complex. In Streptococcus equi subsp. zooepidemicus (strain H70), this protein is DNA mismatch repair protein MutL.